A 338-amino-acid chain; its full sequence is Ketol-acid reductoisomerase (NADP(+)) (338 aa).

The KARI N-terminal Rossmann domain maps to 1-181 (MKVFYDKDAD…GGGRAGIIET (181 aa)). Residues 24–27 (YGSQ), Arg47, and Ser52 each bind NADP(+). Residue His107 is part of the active site. Gly133 provides a ligand contact to NADP(+). In terms of domain architecture, KARI C-terminal knotted spans 182 to 327 (NFREETETDL…AKLRAMMPWI (146 aa)). Mg(2+) is bound by residues Asp190, Glu194, Glu226, and Glu230. Residue Ser251 participates in substrate binding.

This sequence belongs to the ketol-acid reductoisomerase family. Requires Mg(2+) as cofactor.

It carries out the reaction (2R)-2,3-dihydroxy-3-methylbutanoate + NADP(+) = (2S)-2-acetolactate + NADPH + H(+). The enzyme catalyses (2R,3R)-2,3-dihydroxy-3-methylpentanoate + NADP(+) = (S)-2-ethyl-2-hydroxy-3-oxobutanoate + NADPH + H(+). It functions in the pathway amino-acid biosynthesis; L-isoleucine biosynthesis; L-isoleucine from 2-oxobutanoate: step 2/4. The protein operates within amino-acid biosynthesis; L-valine biosynthesis; L-valine from pyruvate: step 2/4. Involved in the biosynthesis of branched-chain amino acids (BCAA). Catalyzes an alkyl-migration followed by a ketol-acid reduction of (S)-2-acetolactate (S2AL) to yield (R)-2,3-dihydroxy-isovalerate. In the isomerase reaction, S2AL is rearranged via a Mg-dependent methyl migration to produce 3-hydroxy-3-methyl-2-ketobutyrate (HMKB). In the reductase reaction, this 2-ketoacid undergoes a metal-dependent reduction by NADPH to yield (R)-2,3-dihydroxy-isovalerate. The sequence is that of Ketol-acid reductoisomerase (NADP(+)) from Ralstonia nicotianae (strain ATCC BAA-1114 / GMI1000) (Ralstonia solanacearum).